The sequence spans 424 residues: Adenylosuccinate synthetase (424 aa).

Residues 12-18 (GDEGKGK) and 40-42 (GHT) each bind GTP. The active-site Proton acceptor is D13. Mg(2+) contacts are provided by D13 and G40. Residues 13–16 (DEGK), 38–41 (NAGH), T130, R144, N220, T235, and R299 contribute to the IMP site. Catalysis depends on H41, which acts as the Proton donor. 295–301 (VTTGRRR) contributes to the substrate binding site. Residues R301, 327–329 (KLD), and 412–414 (GTG) each bind GTP.

Belongs to the adenylosuccinate synthetase family. Homodimer. Mg(2+) serves as cofactor.

Its subcellular location is the cytoplasm. It catalyses the reaction IMP + L-aspartate + GTP = N(6)-(1,2-dicarboxyethyl)-AMP + GDP + phosphate + 2 H(+). The protein operates within purine metabolism; AMP biosynthesis via de novo pathway; AMP from IMP: step 1/2. Plays an important role in the de novo pathway and in the salvage pathway of purine nucleotide biosynthesis. Catalyzes the first committed step in the biosynthesis of AMP from IMP. In Neosartorya fischeri (strain ATCC 1020 / DSM 3700 / CBS 544.65 / FGSC A1164 / JCM 1740 / NRRL 181 / WB 181) (Aspergillus fischerianus), this protein is Adenylosuccinate synthetase.